The following is a 409-amino-acid chain: Elongation factor Tu (409 aa).

The tr-type G domain occupies 10–214 (KPHVNIGTIG…EVDGYIPQPE (205 aa)). Positions 19-26 (GHVDHGKT) are G1. 19–26 (GHVDHGKT) provides a ligand contact to GTP. T26 contributes to the Mg(2+) binding site. The segment at 60–64 (GITIN) is G2. The segment at 81-84 (DCPG) is G3. GTP contacts are provided by residues 81-85 (DCPGH) and 136-139 (NKQD). Residues 136–139 (NKQD) form a G4 region. The tract at residues 174-176 (SAL) is G5.

It belongs to the TRAFAC class translation factor GTPase superfamily. Classic translation factor GTPase family. EF-Tu/EF-1A subfamily. Monomer.

Its subcellular location is the cytoplasm. The enzyme catalyses GTP + H2O = GDP + phosphate + H(+). Its function is as follows. GTP hydrolase that promotes the GTP-dependent binding of aminoacyl-tRNA to the A-site of ribosomes during protein biosynthesis. This Trichodesmium erythraeum (strain IMS101) protein is Elongation factor Tu.